Reading from the N-terminus, the 1295-residue chain is Phosphoribosylformylglycinamidine synthase (1295 aa).

The disordered stretch occupies residues 305–327 (WPGAATGSGGEIRDEGATGRGAK). ATP-binding positions include 307–318 (GAATGSGGEIRD) and A678. E718, N722, and D884 together coordinate Mg(2+). S886 serves as a coordination point for ATP. The region spanning 1042-1295 (VAVLREQGVN…IFRNARKQLG (254 aa)) is the Glutamine amidotransferase type-1 domain. C1135 functions as the Nucleophile in the catalytic mechanism. Residues H1260 and E1262 contribute to the active site.

This sequence in the N-terminal section; belongs to the FGAMS family. In terms of assembly, monomer.

The protein resides in the cytoplasm. It carries out the reaction N(2)-formyl-N(1)-(5-phospho-beta-D-ribosyl)glycinamide + L-glutamine + ATP + H2O = 2-formamido-N(1)-(5-O-phospho-beta-D-ribosyl)acetamidine + L-glutamate + ADP + phosphate + H(+). It participates in purine metabolism; IMP biosynthesis via de novo pathway; 5-amino-1-(5-phospho-D-ribosyl)imidazole from N(2)-formyl-N(1)-(5-phospho-D-ribosyl)glycinamide: step 1/2. Functionally, phosphoribosylformylglycinamidine synthase involved in the purines biosynthetic pathway. Catalyzes the ATP-dependent conversion of formylglycinamide ribonucleotide (FGAR) and glutamine to yield formylglycinamidine ribonucleotide (FGAM) and glutamate. The polypeptide is Phosphoribosylformylglycinamidine synthase (Shigella sonnei (strain Ss046)).